The primary structure comprises 125 residues: NADH-ubiquinone oxidoreductase chain 1 (125 aa).

A run of 3 helical transmembrane segments spans residues 5-25 (IFAFFELITFLVPVLLAVAFL), 74-94 (YLFFASPVLFLTLALLLWNFM), and 105-125 (LSLLLVLGLSSLSVYAILGSG).

This sequence belongs to the complex I subunit 1 family.

It is found in the mitochondrion inner membrane. The enzyme catalyses a ubiquinone + NADH + 5 H(+)(in) = a ubiquinol + NAD(+) + 4 H(+)(out). Core subunit of the mitochondrial membrane respiratory chain NADH dehydrogenase (Complex I) that is believed to belong to the minimal assembly required for catalysis. Complex I functions in the transfer of electrons from NADH to the respiratory chain. The immediate electron acceptor for the enzyme is believed to be ubiquinone. This Arbacia lixula (Black urchin) protein is NADH-ubiquinone oxidoreductase chain 1 (ND1).